A 790-amino-acid polypeptide reads, in one-letter code: Transient receptor potential cation channel subfamily V member 3 (790 aa).

The Cytoplasmic portion of the chain corresponds to 1 to 430 (MKAHPKEMVP…TLEPLHTLLH (430 aa)). Disordered regions lie at residues 15–34 (RVAA…PAEI), 52–71 (PNPT…MDSN), and 76–112 (ISGN…KEEQ). Residues 95–105 (ETPSNPNSPSA) show a composition bias toward polar residues. 7 ANK repeats span residues 117–148 (RRLK…LCRR), 170–198 (TCLM…EEND), 214–243 (EGQT…DVNA), 261–291 (FGET…DITS), 298–330 (NILH…RSGN), 340–362 (DGLT…YILS), and 398–420 (TTDN…HEML). A helical membrane pass occupies residues 431–460 (MKWKKFAKHMFFLSFCFYFFYNITLTLVSY). The Extracellular portion of the chain corresponds to 461-479 (YRPREEEAIPHPLALTHKM). The helical transmembrane segment at 480 to 508 (GWLQLLGRMFVLIWAMCISVKEGIAIFLL) threads the bilayer. The Cytoplasmic portion of the chain corresponds to 509–519 (RPSDLQSILSD). The helical transmembrane segment at 520 to 540 (AWFHFVFFIQAVLVILSVFLY) threads the bilayer. Topologically, residues 541–545 (LFAYK) are extracellular. A helical membrane pass occupies residues 546–566 (EYLACLVLAMALGWANMLYYT). The Cytoplasmic portion of the chain corresponds to 567–569 (RGF). A helical membrane pass occupies residues 570–608 (QSMGMYSVMIQKVILHDVLKFLFVYIVFLLGFGVALASL). Over 609–620 (IEKCPKDNKDCS) the chain is Extracellular. The pore-forming intramembrane region spans 621 to 646 (SYGSFSDAVLELFKLTIGLGDLNIQQ). G638 serves as a coordination point for Na(+). The Extracellular segment spans residues 647–649 (NSK). A helical membrane pass occupies residues 650–686 (YPILFLFLLITYVILTFVLLLNMLIALMGETVENVSK). Residues 687 to 790 (ESERIWRLQR…EVEEFPETSV (104 aa)) are Cytoplasmic-facing.

It belongs to the transient receptor (TC 1.A.4) family. TrpV subfamily. TRPV3 sub-subfamily. As to quaternary structure, homotetramer. May convert from a homotetramer to a homopentamer to allow pore dilation. Interacts with TRPV1; may form a heteromeric channel with TRPV1. Interacts with SNX11; this interaction promotes TRPV3 trafficking from the cell membrane to lysosome for degradation. As to expression, abundantly expressed in CNS. Widely expressed at low levels. Detected in dorsal root ganglion (at protein level). Expressed in the keratinocyte layers of the outer root sheath and, to lesser extent, to the matrix of the hair follicles (at protein level).

Its subcellular location is the cell membrane. It is found in the cytoplasm. The protein localises to the lysosome. The enzyme catalyses Ca(2+)(in) = Ca(2+)(out). It carries out the reaction Mg(2+)(in) = Mg(2+)(out). It catalyses the reaction Na(+)(in) = Na(+)(out). The catalysed reaction is K(+)(in) = K(+)(out). Activated by cannabinoid that binds to the vanilloid binding pocket. Diphenylboronic anhydride induces pore dilation and enhances cation permeability by promoting the conversion to a homopentamer. In terms of biological role, non-selective calcium permeant cation channel. It is activated by innocuous (warm) temperatures and shows an increased response at noxious temperatures greater than 39 degrees Celsius. Activation exhibits an outward rectification. The channel pore can dilate to provide permeability to larger cations. May associate with TRPV1 and may modulate its activity. Is a negative regulator of hair growth and cycling: TRPV3-coupled signaling suppresses keratinocyte proliferation in hair follicles and induces apoptosis and premature hair follicle regression (catagen). The chain is Transient receptor potential cation channel subfamily V member 3 (TRPV3) from Homo sapiens (Human).